A 37-amino-acid polypeptide reads, in one-letter code: Cytochrome b6-f complex subunit 5 (37 aa).

A helical membrane pass occupies residues 5 to 25 (LLSGIVLGLIPITLAGLFVTA).

The protein belongs to the PetG family. As to quaternary structure, the 4 large subunits of the cytochrome b6-f complex are cytochrome b6, subunit IV (17 kDa polypeptide, PetD), cytochrome f and the Rieske protein, while the 4 small subunits are PetG, PetL, PetM and PetN. The complex functions as a dimer.

The protein resides in the plastid. It localises to the chloroplast thylakoid membrane. Component of the cytochrome b6-f complex, which mediates electron transfer between photosystem II (PSII) and photosystem I (PSI), cyclic electron flow around PSI, and state transitions. PetG is required for either the stability or assembly of the cytochrome b6-f complex. In Angiopteris evecta (Mule's foot fern), this protein is Cytochrome b6-f complex subunit 5.